The primary structure comprises 876 residues: MKKLKASEIRQKYLDFFVEKGHMVEPSAPLVPIDDDTLLWINSGVATLKKYFDGRETPKKPRIVNSQKAIRTNDIENVGFTARHHTFFEMLGNFSIGDYFKQEAIEFAWEFLTSDKWMGMEPDKLYVTIHPEDMEAYNIWHKDIGLEESRIIRIEGNFWDIGEGPSGPNTEIFYDRGEAYGQDDPAEEMYPGGENERYLEVWNLVFSEFNHNKDHSYTPLPNKNIDTGMGLERMASVSQNVRTNYETDLFMPIMNEIEKVSGKQYLVNNEQDVAFKVIADHIRTIAFAISDGALPANEGRGYVLRRLLRRAVRFSQTLGINEPFMYKLVDIVADIMEPYYPNVKEKADFIKRVIKSEEERFHETLEDGLAILNELIKKAKATTNEINGKDAFKLYDTYGFPIELTEEIAVQAGLKVDMTTFESEMQQQRDRARQARQNSQSMQVQSEVLKNITSASTFVGYDTATAQTTLTHLIYNGEEVSQVEAGETVYFMLTETPFYAISGGQVADTGIVYNDNFEIAVSEVTKAPNGQNLHKGVVQFGQVNVGATVSAEVNQNDRRDIQKNHSATHLLHAALKSVLGDHVNQAGSLVEADRLRFDFSHFGPMTNDEIDQVERLVNEEIWKGIDVNIQEMDIASAKEMGAMALFGEKYGDVVRVVNMAPFSIELCGGIHVRNTSEIGLFKIVSESGTGAGVRRIEALTGKAAFLYLEDIQEKFNTMKSQLKVKSDDQVVDKLTQLQDEEKALLKQLEQRDKEITSLKMGNIEDQVEEINGYKVLVTEVDVPNAKAIRSTMDDFKSKLQDTIIILASNVDDKVSMVATVPKSLTNNVKAGDLIKQMAPIVGGKGGGRPDMAQGGGTQPENISKSLSFIKDYIKNL.

Residues histidine 565, histidine 569, cysteine 667, and histidine 671 each contribute to the Zn(2+) site.

Belongs to the class-II aminoacyl-tRNA synthetase family. Zn(2+) is required as a cofactor.

Its subcellular location is the cytoplasm. It catalyses the reaction tRNA(Ala) + L-alanine + ATP = L-alanyl-tRNA(Ala) + AMP + diphosphate. In terms of biological role, catalyzes the attachment of alanine to tRNA(Ala) in a two-step reaction: alanine is first activated by ATP to form Ala-AMP and then transferred to the acceptor end of tRNA(Ala). Also edits incorrectly charged Ser-tRNA(Ala) and Gly-tRNA(Ala) via its editing domain. The sequence is that of Alanine--tRNA ligase from Staphylococcus aureus (strain USA300).